We begin with the raw amino-acid sequence, 175 residues long: Large ribosomal subunit protein uL5 (175 aa).

The protein belongs to the universal ribosomal protein uL5 family. As to quaternary structure, part of the 50S ribosomal subunit; contacts the 5S rRNA and probably tRNA. Forms a bridge to the 30S subunit in the 70S ribosome.

Functionally, this is one of the proteins that bind and probably mediate the attachment of the 5S RNA into the large ribosomal subunit, where it forms part of the central protuberance. In the 70S ribosome it contacts protein S13 of the 30S subunit (bridge B1b), connecting the 2 subunits; this bridge is implicated in subunit movement. May contact the P site tRNA; the 5S rRNA and some of its associated proteins might help stabilize positioning of ribosome-bound tRNAs. This Halobacterium salinarum (strain ATCC 29341 / DSM 671 / R1) protein is Large ribosomal subunit protein uL5.